A 144-amino-acid chain; its full sequence is Small ribosomal subunit protein eS12 (144 aa).

The protein belongs to the eukaryotic ribosomal protein eS12 family.

The protein is Small ribosomal subunit protein eS12 (RPS12) of Trypanosoma brucei brucei.